Here is a 289-residue protein sequence, read N- to C-terminus: uncharacterized protein (289 aa).

The N-terminal stretch at 1 to 23 is a signal peptide; sequence MIKNYKLLLFTTFTLFFITFVSG. 4 N-linked (GlcNAc...) asparagine glycosylation sites follow: asparagine 74, asparagine 101, asparagine 132, and asparagine 285.

The protein resides in the secreted. This is an uncharacterized protein from Dictyostelium discoideum (Social amoeba).